The chain runs to 416 residues: Keratin, type I cuticular Ha1 (416 aa).

The head stretch occupies residues proline 2–glutamate 56. Residues glutamate 56–leucine 367 enclose the IF rod domain. Positions lysine 57–arginine 91 are coil 1A. Positions asparagine 92–alanine 102 are linker 1. A coil 1B region spans residues tyrosine 103 to cysteine 203. Positions glutamine 204–valine 219 are linker 12. Residues aspartate 220–glutamate 363 are coil 2. The tract at residues aspartate 364–arginine 416 is tail.

Belongs to the intermediate filament family.

The polypeptide is Keratin, type I cuticular Ha1 (Krt31) (Mus musculus (Mouse)).